A 209-amino-acid chain; its full sequence is Chalcone isomerase-like protein 2 (209 aa).

This sequence belongs to the chalcone isomerase family. As to quaternary structure, component an active demethylxanthohumol (DMX) biosynthetic metabolon in glandular trichomes (lupulin glands) that encompasses a chalcone synthase (CHS) and a membrane-bound prenyltransferase. Interacts with CHS_H1 and PT1L. In terms of tissue distribution, mostly expressed in glandular trichomes (lupulin glands), and, to a lower extent, in cones, cones bracts, leaves, stems and roots.

The protein localises to the cytoplasm. The catalysed reaction is a chalcone = a flavanone.. The protein operates within secondary metabolite biosynthesis; flavonoid biosynthesis. Functionally, involved in the biosynthesis of prenylated phenolics natural products which contribute to the bitter taste of beer and display broad biological activities. Involved in anthocyanin biosynthesis. Polyketide binding proteins (PBP) which promotes the catalytic activities of CHS_H1 and PT1L and triggers demethylxanthohumol (DMX) production. The polypeptide is Chalcone isomerase-like protein 2 (Humulus lupulus (European hop)).